We begin with the raw amino-acid sequence, 544 residues long: uncharacterized protein (544 aa).

12 helical membrane-spanning segments follow: residues 41-61 (FSAW…PSFA), 71-91 (AGTP…QCVA), 106-126 (GLYY…AAWL), 166-186 (YQIF…SSMP), 196-216 (WGTV…LAVA), 240-260 (WSNG…MSGY), 280-300 (AIVM…LCIA), 332-352 (VALT…CMVA), 391-411 (VVGI…NAIF), 413-433 (VGAI…VFFV), 451-471 (INGY…CFPQ), and 484-504 (WTCV…FVSA).

This sequence belongs to the amino acid-polyamine-organocation (APC) superfamily.

The protein resides in the membrane. This is an uncharacterized protein from Schizosaccharomyces pombe (strain 972 / ATCC 24843) (Fission yeast).